Here is an 807-residue protein sequence, read N- to C-terminus: MDQGGLKRNCNRDDSLTFGETAVGVGSDTGDTAGSLLQPAAMHLPSPSSLPQLTVAPNGGAGTKDQGEFGGLFESPRGQCEGSEMKEGKIIRLQKRKHHLDIGMFNMEDNLSLLNQNISDLNRTSTSVISTSDTSVLGKLPLPNLFPQHIKQEGGFSLEKELGTYGGHTGGGPCDLDGNSGHLIEDTEIWQDLDLPNSLPEISDFELDSEVAHLDNILHDSSGGCGPDGSLLKETKVLVGNGGNCTDVNGTDQQHPLQHHQHQQQQHRHLLQHQQHQLHHQHQQPPSLLSSVMIKEEKDHDNSFIHIRTPGVVKQEKQENGSFCQSQCLQSSMSSLHGGGPMSSTMGAGAVPGYHYKASPSSTVGLQDQKPFGIFSNLPAVAESWTRGGRFGEPSGIQRGNDGLPSAAMSPFSVSFSSSSPRTGENSSSAVPGLSKPSGPTHKICLVCSDEASGCHYGVVTCGSCKVFFKRAVEGWRARQNTDGQHNYLCAGRNDCIIDKIRRKNCPACRFRKCLQAGMNLEARKNKKLIKMKVHRPTGSAEPISNMPVPVIPRMPQLVPTMLSVLKAIEPEIIYSGYDSTLPDTSTRLMTTLNRLGGQQVISAVKWAKSLPGFRNLHLDDQMTLLQCSWLFLMSFSLGWRSYEQCNGNMLCFAPDLVINKERMKLPFMTDQCEQMLKICNEFVRLQVSYDEYLCMKVLLLLSTVPKDGLKSQAVFDEIRMTYIKELGKAIVKREENASQNWQRFYQLTKLLDSMQEMVEGLLQICFYTFVNKTLSVEFPEMLAEIITNQIPKFKDGSVKPLLFHQK.

3 disordered regions span residues 1 to 47, 246 to 284, and 412 to 438; these read MDQG…LPSP, TDVNGTDQQHPLQHHQHQQQQHRHLLQHQQHQLHHQHQQ, and FSVSFSSSSPRTGENSSSAVPGLSKPS. The tract at residues 1–444 is modulating; sequence MDQGGLKRNC…SKPSGPTHKI (444 aa). A compositionally biased stretch (basic residues) spans 257–282; the sequence is LQHHQHQQQQHRHLLQHQQHQLHHQH. A compositionally biased stretch (low complexity) spans 412–421; it reads FSVSFSSSSP. NR C4-type zinc fingers lie at residues 445-465 and 490-514; these read CLVCSDEASGCHYGVVTCGSC and CAGRNDCIIDKIRRKNCPACRFRKC. A DNA-binding region (nuclear receptor) is located at residues 445-519; it reads CLVCSDEASG…RFRKCLQAGM (75 aa). Residues 520-553 are hinge; that stretch reads NLEARKNKKLIKMKVHRPTGSAEPISNMPVPVIP. The NR LBD domain occupies 554-788; it reads RMPQLVPTML…FPEMLAEIIT (235 aa).

The protein belongs to the nuclear hormone receptor family. NR3 subfamily. In terms of assembly, heteromultimeric cytoplasmic complex with HSP90. Upon ligand binding the complex undergoes a conformation change and moves to the nucleus, where it dissociates. Binds to DNA as a homodimer, and as heterodimer with NR3C2. Interaction with numerous other transcription factors modulates transcription activation.

It localises to the cytoplasm. The protein resides in the nucleus. It is found in the mitochondrion. The protein localises to the cytoskeleton. Its subcellular location is the spindle. It localises to the microtubule organizing center. The protein resides in the centrosome. Functionally, receptor for glucocorticoids (GC). Has a dual mode of action: as a transcription factor that binds to glucocorticoid response elements (GRE), both for nuclear and mitochondrial DNA, and as a modulator of other transcription factors. Affects inflammatory responses, cellular proliferation and differentiation in target tissues. Involved in chromatin remodeling. Plays a role in rapid mRNA degradation by binding to the 5' UTR of target mRNAs and interacting with PNRC2 in a ligand-dependent manner which recruits the RNA helicase UPF1 and the mRNA-decapping enzyme DCP1A, leading to RNA decay. Could act as a coactivator for STAT5-dependent transcription upon growth hormone (GH) stimulation and could reveal an essential role of hepatic GR in the control of body growth. Mediates glucocorticoid-induced apoptosis. Promotes accurate chromosome segregation during mitosis. May act as a tumor suppressor. May play a negative role in adipogenesis through the regulation of lipolytic and antilipogenic gene expression. The protein is Glucocorticoid receptor (nr3c1) of Paralichthys olivaceus (Bastard halibut).